The chain runs to 93 residues: uncharacterized protein (93 aa).

A TRAM domain is found at 24 to 85 (QLQVGDTLKL…IQTQVGRLFF (62 aa)).

This sequence belongs to the ycf81 family.

This is an uncharacterized protein from Thermus thermophilus.